The following is a 520-amino-acid chain: Peptide chain release factor 3 (520 aa).

Residues 8 to 277 enclose the tr-type G domain; the sequence is ESRKTFAIIS…FAPMPNARQT (270 aa). GTP is bound by residues 17-24, 85-89, and 139-142; these read SHPDAGKT, DTPGH, and NKLD.

Belongs to the TRAFAC class translation factor GTPase superfamily. Classic translation factor GTPase family. PrfC subfamily.

The protein localises to the cytoplasm. Functionally, increases the formation of ribosomal termination complexes and stimulates activities of RF-1 and RF-2. It binds guanine nucleotides and has strong preference for UGA stop codons. It may interact directly with the ribosome. The stimulation of RF-1 and RF-2 is significantly reduced by GTP and GDP, but not by GMP. The chain is Peptide chain release factor 3 from Staphylococcus aureus (strain MRSA252).